We begin with the raw amino-acid sequence, 704 residues long: DNA ligase (704 aa).

Residues 43-47 (DADYD), 92-93 (SL), and glutamate 124 contribute to the NAD(+) site. Lysine 126 acts as the N6-AMP-lysine intermediate in catalysis. Arginine 147, glutamate 182, lysine 298, and lysine 322 together coordinate NAD(+). Positions 427, 430, 445, and 451 each coordinate Zn(2+). Residues 625 to 704 (PVASPVAGKI…DGWLRLIGDA (80 aa)) form the BRCT domain.

This sequence belongs to the NAD-dependent DNA ligase family. LigA subfamily. Requires Mg(2+) as cofactor. The cofactor is Mn(2+).

It carries out the reaction NAD(+) + (deoxyribonucleotide)n-3'-hydroxyl + 5'-phospho-(deoxyribonucleotide)m = (deoxyribonucleotide)n+m + AMP + beta-nicotinamide D-nucleotide.. Its function is as follows. DNA ligase that catalyzes the formation of phosphodiester linkages between 5'-phosphoryl and 3'-hydroxyl groups in double-stranded DNA using NAD as a coenzyme and as the energy source for the reaction. It is essential for DNA replication and repair of damaged DNA. This Cereibacter sphaeroides (strain ATCC 17029 / ATH 2.4.9) (Rhodobacter sphaeroides) protein is DNA ligase.